Consider the following 253-residue polypeptide: MDVALRIIPCLDIDGKAGVVVKGVNFQGIREVGDPVEMAVRYEEEGADEIAILDITAAPEGRATFIDSVKRVAEAVSIPVLVGGGVRSLEDATTLFRAGADKVSVNTAAVRNPQLVALLAREFGSQSTVVAIDAKWNGEYYEVYVKGGREATGLDAVKWAKEVEELGAGEILLTSIDRDGTGLGYDVELIRRVADSVRIPVIASGGAGRVEHFYEAAAAGADAVLAASLFHFRVLSIAQVKRYLKERGVEVRI.

Residues D12 and D133 contribute to the active site.

It belongs to the HisA/HisF family. Heterodimer of HisH and HisF.

The protein resides in the cytoplasm. The catalysed reaction is 5-[(5-phospho-1-deoxy-D-ribulos-1-ylimino)methylamino]-1-(5-phospho-beta-D-ribosyl)imidazole-4-carboxamide + L-glutamine = D-erythro-1-(imidazol-4-yl)glycerol 3-phosphate + 5-amino-1-(5-phospho-beta-D-ribosyl)imidazole-4-carboxamide + L-glutamate + H(+). The protein operates within amino-acid biosynthesis; L-histidine biosynthesis; L-histidine from 5-phospho-alpha-D-ribose 1-diphosphate: step 5/9. In terms of biological role, IGPS catalyzes the conversion of PRFAR and glutamine to IGP, AICAR and glutamate. The HisF subunit catalyzes the cyclization activity that produces IGP and AICAR from PRFAR using the ammonia provided by the HisH subunit. This is Imidazole glycerol phosphate synthase subunit HisF (hisF) from Pyrobaculum aerophilum (strain ATCC 51768 / DSM 7523 / JCM 9630 / CIP 104966 / NBRC 100827 / IM2).